The sequence spans 166 residues: Interferon gamma (166 aa).

A signal peptide spans 1–23 (MKYTSYFLALLLCVLLGFSGSYG). Gln24 is subject to Pyrrolidone carboxylic acid. Residues Asn39 and Asn106 are each glycosylated (N-linked (GlcNAc...) asparagine).

It belongs to the type II (or gamma) interferon family. In terms of assembly, homodimer. Interacts with IFNGR1 (via extracellular domain); this interaction promotes IFNGR1 dimerization. Released primarily from activated T lymphocytes.

The protein resides in the secreted. Type II interferon produced by immune cells such as T-cells and NK cells that plays crucial roles in antimicrobial, antiviral, and antitumor responses by activating effector immune cells and enhancing antigen presentation. Primarily signals through the JAK-STAT pathway after interaction with its receptor IFNGR1 to affect gene regulation. Upon IFNG binding, IFNGR1 intracellular domain opens out to allow association of downstream signaling components JAK2, JAK1 and STAT1, leading to STAT1 activation, nuclear translocation and transcription of IFNG-regulated genes. Many of the induced genes are transcription factors such as IRF1 that are able to further drive regulation of a next wave of transcription. Plays a role in class I antigen presentation pathway by inducing a replacement of catalytic proteasome subunits with immunoproteasome subunits. In turn, increases the quantity, quality, and repertoire of peptides for class I MHC loading. Increases the efficiency of peptide generation also by inducing the expression of activator PA28 that associates with the proteasome and alters its proteolytic cleavage preference. Up-regulates as well MHC II complexes on the cell surface by promoting expression of several key molecules such as cathepsins B/CTSB, H/CTSH, and L/CTSL. Participates in the regulation of hematopoietic stem cells during development and under homeostatic conditions by affecting their development, quiescence, and differentiation. This Bos indicus (Zebu) protein is Interferon gamma (IFNG).